Reading from the N-terminus, the 345-residue chain is Biotin synthase (345 aa).

A Radical SAM core domain is found at 38–256 (RQVQVSTLLS…IAVARIMMPS (219 aa)). [4Fe-4S] cluster is bound by residues C53, C57, and C60. Residues C97, C128, C188, and R260 each coordinate [2Fe-2S] cluster.

It belongs to the radical SAM superfamily. Biotin synthase family. In terms of assembly, homodimer. It depends on [4Fe-4S] cluster as a cofactor. Requires [2Fe-2S] cluster as cofactor.

The enzyme catalyses (4R,5S)-dethiobiotin + (sulfur carrier)-SH + 2 reduced [2Fe-2S]-[ferredoxin] + 2 S-adenosyl-L-methionine = (sulfur carrier)-H + biotin + 2 5'-deoxyadenosine + 2 L-methionine + 2 oxidized [2Fe-2S]-[ferredoxin]. It participates in cofactor biosynthesis; biotin biosynthesis; biotin from 7,8-diaminononanoate: step 2/2. Catalyzes the conversion of dethiobiotin (DTB) to biotin by the insertion of a sulfur atom into dethiobiotin via a radical-based mechanism. This chain is Biotin synthase, found in Yersinia pestis bv. Antiqua (strain Antiqua).